The following is a 294-amino-acid chain: Beta-lactamase SME-1 (294 aa).

A signal peptide spans 1 to 27; the sequence is MSNKVNFKTASFLFSVCLALSAFNAHA. The cysteines at positions 72 and 242 are disulfide-linked. Residue Ser-73 is the Nucleophile; acyl-ester intermediate of the active site. A beta-lactam contacts are provided by Ser-73, Lys-76, Ser-133, and Asn-135. The active-site Proton acceptor is the Glu-172. Thr-239 is a binding site for a beta-lactam.

Belongs to the class-A beta-lactamase family.

It catalyses the reaction a beta-lactam + H2O = a substituted beta-amino acid. Partially inhibited by the beta-lactamase-blocking agents, clavulanic acid and tazobactam. Not inhibited by EDTA. In terms of biological role, class A beta-lactamase which confers resistance to the beta-lactam antibiotics, including penicillins, some cephalosporins and carbapenems, to JM109 strain E.coli. Acts via hydrolysis of the beta-lactam ring. Has penicillin-, cephalosporin- and carbapenem-hydrolyzing activities. The polypeptide is Beta-lactamase SME-1 (Serratia marcescens).